A 215-amino-acid polypeptide reads, in one-letter code: Protein GET1 (215 aa).

Residues 1-4 lie on the Lumenal side of the membrane; it reads MINL. Residues 5 to 24 traverse the membrane as a helical segment; the sequence is ALVIFLCTLLNQIVSWVGKS. The Cytoplasmic segment spans residues 25-108; the sequence is VLQEIAFTAY…SFSKKFSTLL (84 aa). A coiled-coil region spans residues 73 to 94; that stretch reads AKLRRKLDKGLADLEKTNNTLS. Residues 109–129 traverse the membrane as a helical segment; it reads WLMTTGAQFLLSWWFRKQPIF. The Lumenal portion of the chain corresponds to 130–153; that stretch reads WLPEGWVPYPVAWLLSFPSAPIGS. A helical transmembrane segment spans residues 154–170; that stretch reads VSSGAWGAICRRVLSTL. Over 171 to 215 the chain is Cytoplasmic; sequence QEIIQSVLAPSPAATGPVPTGPSSAKNDQPEAKIEALALEHEKLD. The tract at residues 181–202 is disordered; sequence SPAATGPVPTGPSSAKNDQPEA.

Belongs to the WRB/GET1 family. As to quaternary structure, interacts with GET3.

The protein resides in the endoplasmic reticulum membrane. Functionally, required for the post-translational delivery of tail-anchored (TA) proteins to the endoplasmic reticulum. Acts as a membrane receptor for soluble GET3, which recognizes and selectively binds the transmembrane domain of TA proteins in the cytosol. The sequence is that of Protein GET1 from Cryptococcus neoformans var. neoformans serotype D (strain B-3501A) (Filobasidiella neoformans).